Reading from the N-terminus, the 199-residue chain is UPF0301 protein Vapar_4617 (199 aa).

This sequence belongs to the UPF0301 (AlgH) family.

The protein is UPF0301 protein Vapar_4617 of Variovorax paradoxus (strain S110).